The primary structure comprises 209 residues: Large ribosomal subunit protein uL3 (209 aa).

This sequence belongs to the universal ribosomal protein uL3 family. In terms of assembly, part of the 50S ribosomal subunit. Forms a cluster with proteins L14 and L19.

One of the primary rRNA binding proteins, it binds directly near the 3'-end of the 23S rRNA, where it nucleates assembly of the 50S subunit. The sequence is that of Large ribosomal subunit protein uL3 from Carboxydothermus hydrogenoformans (strain ATCC BAA-161 / DSM 6008 / Z-2901).